The chain runs to 679 residues: Methionine--tRNA ligase (679 aa).

Residues 14 to 24 carry the 'HIGH' region motif; that stretch reads PYANGSIHLGH. 4 residues coordinate Zn(2+): Cys-145, Cys-148, Cys-158, and Cys-161. A 'KMSKS' region motif is present at residues 331–335; it reads KMSKS. Lys-334 is a binding site for ATP. Residues 577–679 form the tRNA-binding domain; the sequence is TFAAVDLRVA…SGAKPGQRIK (103 aa).

It belongs to the class-I aminoacyl-tRNA synthetase family. MetG type 1 subfamily. As to quaternary structure, homodimer. Requires Zn(2+) as cofactor.

Its subcellular location is the cytoplasm. It carries out the reaction tRNA(Met) + L-methionine + ATP = L-methionyl-tRNA(Met) + AMP + diphosphate. Its function is as follows. Is required not only for elongation of protein synthesis but also for the initiation of all mRNA translation through initiator tRNA(fMet) aminoacylation. This Pseudomonas putida (strain ATCC 47054 / DSM 6125 / CFBP 8728 / NCIMB 11950 / KT2440) protein is Methionine--tRNA ligase.